Reading from the N-terminus, the 282-residue chain is Uracil-DNA glycosylase (282 aa).

The interval 15-40 is disordered; it reads SAASKRKSASNTENIPEKVPAGNENQ. Aspartate 123 serves as the catalytic Proton acceptor.

This sequence belongs to the uracil-DNA glycosylase (UDG) superfamily. UNG family.

It is found in the mitochondrion. The protein resides in the nucleus. The enzyme catalyses Hydrolyzes single-stranded DNA or mismatched double-stranded DNA and polynucleotides, releasing free uracil.. With respect to regulation, inhibited by UGI, a B.subtilis bacteriophage PBS2 peptide inhibitor. Functionally, excises uracil residues from the DNA which can arise as a result of misincorporation of dUMP residues by DNA polymerase or due to deamination of cytosine. In Caenorhabditis elegans, this protein is Uracil-DNA glycosylase.